The primary structure comprises 95 residues: Defensin (95 aa).

Positions 1 to 17 (MKNYVFALLVVTAVAIA) are cleaved as a signal peptide. The propeptide occupies 18–55 (LPNEDKNAPMRVHLLPQKEDESLKLEVTPVKEHHRTRR). 3 disulfides stabilise this stretch: cysteine 58–cysteine 85, cysteine 71–cysteine 91, and cysteine 75–cysteine 93.

It belongs to the invertebrate defensin family. Type 1 subfamily.

Its subcellular location is the secreted. Functionally, antibacterial peptide mostly active against Gram-positive bacteria. This Formica aquilonia (Red wood ant) protein is Defensin.